We begin with the raw amino-acid sequence, 204 residues long: Holliday junction branch migration complex subunit RuvA (204 aa).

The interval 1-64 is domain I; the sequence is MIGRVTGILV…EDAHLLFGFS (64 aa). The interval 65–143 is domain II; the sequence is HKQDRSLFRE…GLQQTDFFIK (79 aa). Positions 144–155 are flexible linker; that stretch reads SSHLPGIKCSKL. The tract at residues 156 to 204 is domain III; the sequence is DQSLQLDEAVSALIALGYKPIEAEKMVKKVLKADLTSEQLIREALKAAL.

It belongs to the RuvA family. Homotetramer. Forms an RuvA(8)-RuvB(12)-Holliday junction (HJ) complex. HJ DNA is sandwiched between 2 RuvA tetramers; dsDNA enters through RuvA and exits via RuvB. An RuvB hexamer assembles on each DNA strand where it exits the tetramer. Each RuvB hexamer is contacted by two RuvA subunits (via domain III) on 2 adjacent RuvB subunits; this complex drives branch migration. In the full resolvosome a probable DNA-RuvA(4)-RuvB(12)-RuvC(2) complex forms which resolves the HJ.

It localises to the cytoplasm. The RuvA-RuvB-RuvC complex processes Holliday junction (HJ) DNA during genetic recombination and DNA repair, while the RuvA-RuvB complex plays an important role in the rescue of blocked DNA replication forks via replication fork reversal (RFR). RuvA specifically binds to HJ cruciform DNA, conferring on it an open structure. The RuvB hexamer acts as an ATP-dependent pump, pulling dsDNA into and through the RuvAB complex. HJ branch migration allows RuvC to scan DNA until it finds its consensus sequence, where it cleaves and resolves the cruciform DNA. This is Holliday junction branch migration complex subunit RuvA from Histophilus somni (strain 2336) (Haemophilus somnus).